The sequence spans 342 residues: tRNA-specific 2-thiouridylase MnmA (342 aa).

ATP-binding positions include 6 to 13 and Leu32; that span reads LLSGGVDS. Cys92 acts as the Nucleophile in catalysis. A disulfide bridge links Cys92 with Cys191. Gly116 provides a ligand contact to ATP. The tract at residues 138 to 140 is interaction with tRNA; that stretch reads KDQ. Cys191 functions as the Cysteine persulfide intermediate in the catalytic mechanism. The segment at 293–294 is interaction with tRNA; sequence RY.

It belongs to the MnmA/TRMU family.

Its subcellular location is the cytoplasm. The catalysed reaction is S-sulfanyl-L-cysteinyl-[protein] + uridine(34) in tRNA + AH2 + ATP = 2-thiouridine(34) in tRNA + L-cysteinyl-[protein] + A + AMP + diphosphate + H(+). Catalyzes the 2-thiolation of uridine at the wobble position (U34) of tRNA, leading to the formation of s(2)U34. The chain is tRNA-specific 2-thiouridylase MnmA from Helicobacter pylori (strain ATCC 700392 / 26695) (Campylobacter pylori).